Here is a 160-residue protein sequence, read N- to C-terminus: Ribosome maturation factor RimP (160 aa).

This sequence belongs to the RimP family.

It localises to the cytoplasm. In terms of biological role, required for maturation of 30S ribosomal subunits. This is Ribosome maturation factor RimP from Syntrophus aciditrophicus (strain SB).